Consider the following 34-residue polypeptide: Mytilin-B (34 aa).

Disulfide bonds link C2–C27, C6–C29, C10–C31, and C15–C34.

The protein resides in the secreted. In terms of biological role, has antibacterial and antiviral activity. The chain is Mytilin-B from Mytilus edulis (Blue mussel).